We begin with the raw amino-acid sequence, 166 residues long: Putative 4-hydroxy-4-methyl-2-oxoglutarate aldolase (166 aa).

Substrate is bound by residues 74-77 (GDQI) and arginine 96. Residue aspartate 97 participates in a divalent metal cation binding.

It belongs to the class II aldolase/RraA-like family. Homotrimer. A divalent metal cation serves as cofactor.

It catalyses the reaction 4-hydroxy-4-methyl-2-oxoglutarate = 2 pyruvate. It carries out the reaction oxaloacetate + H(+) = pyruvate + CO2. Functionally, catalyzes the aldol cleavage of 4-hydroxy-4-methyl-2-oxoglutarate (HMG) into 2 molecules of pyruvate. Also contains a secondary oxaloacetate (OAA) decarboxylase activity due to the common pyruvate enolate transition state formed following C-C bond cleavage in the retro-aldol and decarboxylation reactions. The polypeptide is Putative 4-hydroxy-4-methyl-2-oxoglutarate aldolase (Xanthomonas axonopodis pv. citri (strain 306)).